The following is a 194-amino-acid chain: Xanthine phosphoribosyltransferase (194 aa).

Positions 20 and 27 each coordinate xanthine. A 5-phospho-alpha-D-ribose 1-diphosphate-binding site is contributed by 128–132 (ANGQA). A xanthine-binding site is contributed by K156.

This sequence belongs to the purine/pyrimidine phosphoribosyltransferase family. Xpt subfamily. As to quaternary structure, homodimer.

The protein resides in the cytoplasm. The enzyme catalyses XMP + diphosphate = xanthine + 5-phospho-alpha-D-ribose 1-diphosphate. It functions in the pathway purine metabolism; XMP biosynthesis via salvage pathway; XMP from xanthine: step 1/1. Its function is as follows. Converts the preformed base xanthine, a product of nucleic acid breakdown, to xanthosine 5'-monophosphate (XMP), so that it can be reused for RNA or DNA synthesis. In Bacillus subtilis (strain 168), this protein is Xanthine phosphoribosyltransferase (xpt).